Consider the following 185-residue polypeptide: MAREREQRHEREDRDNTFVDKLVHINRVAKVVKGGRRFGFAALVVVGDQKGRVGFGHGKAREVPEAIRKATESAKRALIRVPLREGRTLHHDVHGHHGAGKVILRAAPAGTGIIAGGPMRAVFETLGMHDVVAKSFGSSNPYNMVRATFDALKNQDSPRSVAARRGIKVSQLQSRRRVEDAEATD.

The S5 DRBM domain occupies 18–81; that stretch reads FVDKLVHINR…ESAKRALIRV (64 aa). The interval 157-185 is disordered; the sequence is SPRSVAARRGIKVSQLQSRRRVEDAEATD. Residues 176 to 185 show a composition bias toward basic and acidic residues; sequence RRVEDAEATD.

It belongs to the universal ribosomal protein uS5 family. In terms of assembly, part of the 30S ribosomal subunit. Contacts proteins S4 and S8.

Functionally, with S4 and S12 plays an important role in translational accuracy. Located at the back of the 30S subunit body where it stabilizes the conformation of the head with respect to the body. The sequence is that of Small ribosomal subunit protein uS5 from Xanthobacter autotrophicus (strain ATCC BAA-1158 / Py2).